The chain runs to 907 residues: Translation initiation factor IF-2 (907 aa).

3 stretches are compositionally biased toward basic and acidic residues: residues 223–235 (LAQR…KRAA), 251–263 (VAKE…EKNA), and 270–281 (GGKDWNDSDGKK). Positions 223–320 (LAQRRQEEAK…ENQQHAFTAP (98 aa)) are disordered. Residues 407 to 576 (PRPPVVTVMG…LLQAEVLELK (170 aa)) enclose the tr-type G domain. The interval 416–423 (GHVDHGKT) is G1. Residue 416–423 (GHVDHGKT) coordinates GTP. The tract at residues 441 to 445 (GITQH) is G2. The G3 stretch occupies residues 462-465 (DTPG). Residues 462–466 (DTPGH) and 516–519 (NKID) each bind GTP. The tract at residues 516 to 519 (NKID) is G4. A G5 region spans residues 552-554 (SAK).

It belongs to the TRAFAC class translation factor GTPase superfamily. Classic translation factor GTPase family. IF-2 subfamily.

The protein resides in the cytoplasm. Its function is as follows. One of the essential components for the initiation of protein synthesis. Protects formylmethionyl-tRNA from spontaneous hydrolysis and promotes its binding to the 30S ribosomal subunits. Also involved in the hydrolysis of GTP during the formation of the 70S ribosomal complex. This Methylobacillus flagellatus (strain ATCC 51484 / DSM 6875 / VKM B-1610 / KT) protein is Translation initiation factor IF-2.